The following is a 419-amino-acid chain: Tyrosine--tRNA ligase (419 aa).

Y34 contacts L-tyrosine. Positions 39–48 (PSGDSMHIGH) match the 'HIGH' region motif. Residues Y168 and Q172 each coordinate L-tyrosine. The 'KMSKS' region motif lies at 230 to 234 (KFGKS). K233 lines the ATP pocket. The region spanning 352–418 (VNLVDWLVSL…GKKKYFLVSY (67 aa)) is the S4 RNA-binding domain.

This sequence belongs to the class-I aminoacyl-tRNA synthetase family. TyrS type 1 subfamily. In terms of assembly, homodimer.

It is found in the cytoplasm. The enzyme catalyses tRNA(Tyr) + L-tyrosine + ATP = L-tyrosyl-tRNA(Tyr) + AMP + diphosphate + H(+). Functionally, catalyzes the attachment of tyrosine to tRNA(Tyr) in a two-step reaction: tyrosine is first activated by ATP to form Tyr-AMP and then transferred to the acceptor end of tRNA(Tyr). This chain is Tyrosine--tRNA ligase, found in Listeria welshimeri serovar 6b (strain ATCC 35897 / DSM 20650 / CCUG 15529 / CIP 8149 / NCTC 11857 / SLCC 5334 / V8).